A 450-amino-acid polypeptide reads, in one-letter code: Phosphoglucosamine mutase (450 aa).

The active-site Phosphoserine intermediate is the serine 101. Positions 101, 240, 242, and 244 each coordinate Mg(2+). Phosphoserine is present on serine 101.

This sequence belongs to the phosphohexose mutase family. The cofactor is Mg(2+). Post-translationally, activated by phosphorylation.

The catalysed reaction is alpha-D-glucosamine 1-phosphate = D-glucosamine 6-phosphate. Catalyzes the conversion of glucosamine-6-phosphate to glucosamine-1-phosphate. The protein is Phosphoglucosamine mutase of Streptococcus thermophilus (strain ATCC BAA-250 / LMG 18311).